A 379-amino-acid polypeptide reads, in one-letter code: MHWIWLVLLLAVVGAIVGAATNALAIRMLFRPHRAYSIGKWQLPFTPGLLPRRQKELAVQLGNIVANHLLTAEGLGKKFGSTAFAAELTNWLKKQLASWLRSERTVESILKPLFQADIGREHLVVQSKSWLKDRLKRYLQKNKEVPIKSVVPQELQDRLTDWLPEASALLLKRATAYIDSEEGEQRIGAMVRQFLTTKGKVGSMVSMFFSADKLTEYVLPEIKKFLHDEQTKETVQSLLQTEWHRMLNRPLASFQAENYVDQFVDKAAEELEGKIPVLNWYNAPLSTWTTPYAEPLVERGVPVIVGMVTVYMEQHIADILSKLRLEEVIEEQVASFSMAHLEKLIMNITRRELHMITLLGGLIGGIVGLIQAVIVHFFY.

2 consecutive transmembrane segments (helical) span residues 1–21 (MHWI…GAAT) and 358–378 (LLGG…VHFF).

This sequence belongs to the UPF0754 family.

Its subcellular location is the cell membrane. This is UPF0754 membrane protein ABC1518 from Shouchella clausii (strain KSM-K16) (Alkalihalobacillus clausii).